Reading from the N-terminus, the 556-residue chain is Arginine--tRNA ligase (556 aa).

Positions Ala133 to His143 match the 'HIGH' region motif.

This sequence belongs to the class-I aminoacyl-tRNA synthetase family. As to quaternary structure, monomer.

The protein resides in the cytoplasm. The enzyme catalyses tRNA(Arg) + L-arginine + ATP = L-arginyl-tRNA(Arg) + AMP + diphosphate. This is Arginine--tRNA ligase from Dehalococcoides mccartyi (strain CBDB1).